Consider the following 400-residue polypeptide: Probable peptidoglycan glycosyltransferase FtsW (400 aa).

Over 1-29 (MVIERIKHLASPLQDWVFTPSPKVMFDRQ) the chain is Cytoplasmic. Residues 30–50 (LIWIALGLMLTGLVMVASASF) form a helical membrane-spanning segment. The Periplasmic segment spans residues 51–60 (PISTRLTGQP). A helical transmembrane segment spans residues 61-81 (FHFMMRHMLFVFLALSISSIV). At 82–95 (LRIELNKWLKYSSH) the chain is on the cytoplasmic side. The chain crosses the membrane as a helical span at residues 96-116 (LLLISLLLLAAVLVVGKSVNG). Topologically, residues 117–122 (AARWLP) are periplasmic. A helical membrane pass occupies residues 123–143 (LGIFNLQPAEVAKLSLFVFIA). Over 144–155 (GYLVRRHGEVRD) the chain is Cytoplasmic. Residues 156–176 (SFRGFVKPLLVLITLAFFLLM) form a helical membrane-spanning segment. The Periplasmic segment spans residues 177–178 (QP). A helical transmembrane segment spans residues 179–199 (DLGTTVVMFVTTIAMLFIAGA). Residue Lys-200 is a topological domain, cytoplasmic. Residues 201-221 (LWQFIALVMGGISLVIVLILA) form a helical membrane-spanning segment. The Periplasmic segment spans residues 222 to 290 (EPYRMRRVTS…VFAVIAEELG (69 aa)). A helical membrane pass occupies residues 291-311 (FVGVCLVLCLIFALVFKALLI). Topologically, residues 312-321 (GRKCLAHDQR) are cytoplasmic. Residues 322 to 342 (FGGFLAFGIGIWFAFQTLVNV) form a helical membrane-spanning segment. Residues 343–356 (GAAAGIVPTKGLTL) are Periplasmic-facing. The helical transmembrane segment at 357-377 (PLISYGGSSLIIMSVAVSLLI) threads the bilayer. The Cytoplasmic segment spans residues 378-400 (RIDHECRVYLANEPPRSENEEQK).

The protein belongs to the SEDS family. FtsW subfamily.

It localises to the cell inner membrane. The enzyme catalyses [GlcNAc-(1-&gt;4)-Mur2Ac(oyl-L-Ala-gamma-D-Glu-L-Lys-D-Ala-D-Ala)](n)-di-trans,octa-cis-undecaprenyl diphosphate + beta-D-GlcNAc-(1-&gt;4)-Mur2Ac(oyl-L-Ala-gamma-D-Glu-L-Lys-D-Ala-D-Ala)-di-trans,octa-cis-undecaprenyl diphosphate = [GlcNAc-(1-&gt;4)-Mur2Ac(oyl-L-Ala-gamma-D-Glu-L-Lys-D-Ala-D-Ala)](n+1)-di-trans,octa-cis-undecaprenyl diphosphate + di-trans,octa-cis-undecaprenyl diphosphate + H(+). Its pathway is cell wall biogenesis; peptidoglycan biosynthesis. Functionally, peptidoglycan polymerase that is essential for cell division. The protein is Probable peptidoglycan glycosyltransferase FtsW of Aliivibrio salmonicida (strain LFI1238) (Vibrio salmonicida (strain LFI1238)).